Consider the following 715-residue polypeptide: Tensin-4 (715 aa).

The N-terminal stretch at 1-18 is a signal peptide; it reads MSQVMSSPLLAGGHAVSL. Serine 82 carries the phosphoserine modification. Disordered stretches follow at residues 159–183, 195–251, 291–364, and 376–435; these read RCHDGPQHCSSPSVTPPFGSLRSGG, RSSS…SPLV, SLLH…CPPS, and LING…ARDM. A compositionally biased stretch (polar residues) spans 197–206; sequence SSESLIFSGN. Serine 248 carries the phosphoserine modification. The span at 291-325 shows a compositional bias: low complexity; sequence SLLHSSNSSHQSSSRSLESPANSSSSLHSLGSVSL. Residues 449-556 enclose the SH2 domain; the sequence is WFKPNITREQ…ALPCKLTIPQ (108 aa). The PTB domain maps to 582–705; it reads CHTLYLSSVS…QPASQVIGLV (124 aa).

This sequence belongs to the PTEN phosphatase protein family. In terms of assembly, interacts (via SH2 domain) with Rho GTPase-activating protein DLC1 (via C-terminus); the interaction is independent of DLC1 tyrosine phosphorylation. Interacts with integrin ITGB1; the interaction displaces tensin TNS3 from the ITGB1 cytoplasmic tail and promotes ITGB1 stability. Interacts (via SH2 domain) with E3 ubiquitin-protein ligase CBL (phosphorylated on 'Tyr-774'); the interaction is enhanced in the presence of EGF and reduces interaction of CBL with EGFR. Interacts (via SH2 domain) with receptor tyrosine kinase MET (when phosphorylated); the interaction increases MET protein stability. Post-translationally, proteolytically cleaved by caspase-3 during apoptosis. As to expression, expressed at low levels in colon (at protein level). Expressed in prostate and placenta.

Its subcellular location is the cell junction. The protein resides in the focal adhesion. It localises to the cytoplasm. The protein localises to the cytoskeleton. In terms of biological role, promotes EGF-induced cell migration by displacing tensin TNS3 from the cytoplasmic tail of integrin ITGB1 which results in dissociation of TNS3 from focal adhesions, disassembly of actin stress fibers and initiation of cell migration. Suppresses ligand-induced degradation of EGFR by reducing EGFR ubiquitination in the presence of EGF. Increases MET protein stability by inhibiting MET endocytosis and subsequent lysosomal degradation which leads to increased cell survival, proliferation and migration. This chain is Tensin-4 (TNS4), found in Homo sapiens (Human).